A 3916-amino-acid chain; its full sequence is Fusarin C synthetase (3916 aa).

The region spanning 9-440 (KEPIAIIGTS…GTNVHAIIEQ (432 aa)) is the Ketosynthase family 3 (KS3) domain. Active-site for beta-ketoacyl synthase activity residues include Cys-182, His-319, and His-360. Residues 548–866 (VFTGQGAQWP…QGTVARNIHD (319 aa)) form a malonyl-CoA:ACP transacylase (MAT) domain region. The N-terminal hotdog fold stretch occupies residues 935–1068 (HPLLGARSVE…GQLRVEFGCS (134 aa)). The tract at residues 935 to 1228 (HPLLGARSVE…GLTCTSLLRP (294 aa)) is dehydratase (DH) domain. Residues 935 to 1231 (HPLLGARSVE…CTSLLRPGPS (297 aa)) enclose the PKS/mFAS DH domain. His-967 (proton acceptor; for dehydratase activity) is an active-site residue. The C-terminal hotdog fold stretch occupies residues 1084–1231 (LTSVNMERFY…CTSLLRPGPS (148 aa)). Catalysis depends on Asp-1141, which acts as the Proton donor; for dehydratase activity. Residues 1347-1575 (IQAVGENLPS…VNDFVDAEKY (229 aa)) form a C-methyltransferase (CMeT) domain region. Residues 2092 to 2266 (TYLLIGCTGG…AASVMHIGMV (175 aa)) form a ketoreductase (KR) domain 1 region. A Carrier 1 domain is found at 2372–2449 (EILAVVEEEF…ELCSTVVSHL (78 aa)). Ser-2409 is modified (O-(pantetheine 4'-phosphoryl)serine). Residues 2487–2510 (NEPFTIRNSPNSTQVTSEAGVDED) are disordered. A compositionally biased stretch (polar residues) spans 2492-2503 (IRNSPNSTQVTS). A condensation region spans residues 2522–2806 (PLSFAQERLW…VNLLPLRLKI (285 aa)). The interval 2975–3385 (EFVVKQPDDT…RIAGDSQIKL (411 aa)) is adenylation. Positions 3493–3570 (KPLTETQERL…EMAAKIDGST (78 aa)) constitute a Carrier 2 domain. Ser-3530 is subject to O-(pantetheine 4'-phosphoryl)serine. Residues 3612-3833 (LTGATGFLGV…DFVPVDVVAA (222 aa)) are thiolester reductase (R) domain.

In the C-terminal section; belongs to the NRP synthetase family.

It functions in the pathway mycotoxin biosynthesis. Functionally, fusarin C synthetase; part of the gene cluster that mediates the biosynthesis of the mycotoxin fusarin C. Within the cluster, FUS1, FUS2, FUS8 and FUS9 are sufficient for fusarin production. The roles of the other FUS members are yet undetermined. The fusarin C synthetase FUS1 is responsible for the condensation of one acetyl-coenzyme A (CoA) unit with six malonyl-CoA units and the amide linkage of the arising heptaketide and homoserine, subsequently releasing the first intermediate, prefusarin, as an alcohol with an open ring structure. The cytochrome P450 monooxygenase FUS8 participates in multiple oxidation processes at carbon C-20 and is able to use the FUS1 product as substrate, resulting in formation of 20-hydroxy-prefusarin. This reaction seems to be essential before the 2-pyrrolidone ring closure can be catalyzed by FUS2, generating 20-hydroxy-fusarin. FUS8 is able to further oxidizes carbon C-20 after ring closure, resulting in the formation of carboxy-fusarin C. As the last step, FUS9 methylates the hydroxyl group at C-21 to generate fusarin C. Fusarin C can then rearrange to epi-fusarin C, the (z)-isomers, and fusarin A and fusarin D. The protein is Fusarin C synthetase of Gibberella fujikuroi (strain CBS 195.34 / IMI 58289 / NRRL A-6831) (Bakanae and foot rot disease fungus).